Consider the following 379-residue polypeptide: UDP-N-acetylglucosamine--N-acetylmuramyl-(pentapeptide) pyrophosphoryl-undecaprenol N-acetylglucosamine transferase (379 aa).

UDP-N-acetyl-alpha-D-glucosamine contacts are provided by residues 17–19 (TGG), Asn128, Arg169, Ser197, and Gln298.

It belongs to the glycosyltransferase 28 family. MurG subfamily.

The protein localises to the cell inner membrane. It carries out the reaction di-trans,octa-cis-undecaprenyl diphospho-N-acetyl-alpha-D-muramoyl-L-alanyl-D-glutamyl-meso-2,6-diaminopimeloyl-D-alanyl-D-alanine + UDP-N-acetyl-alpha-D-glucosamine = di-trans,octa-cis-undecaprenyl diphospho-[N-acetyl-alpha-D-glucosaminyl-(1-&gt;4)]-N-acetyl-alpha-D-muramoyl-L-alanyl-D-glutamyl-meso-2,6-diaminopimeloyl-D-alanyl-D-alanine + UDP + H(+). It functions in the pathway cell wall biogenesis; peptidoglycan biosynthesis. Cell wall formation. Catalyzes the transfer of a GlcNAc subunit on undecaprenyl-pyrophosphoryl-MurNAc-pentapeptide (lipid intermediate I) to form undecaprenyl-pyrophosphoryl-MurNAc-(pentapeptide)GlcNAc (lipid intermediate II). This Brucella melitensis biotype 2 (strain ATCC 23457) protein is UDP-N-acetylglucosamine--N-acetylmuramyl-(pentapeptide) pyrophosphoryl-undecaprenol N-acetylglucosamine transferase.